Reading from the N-terminus, the 440-residue chain is Phosphoglucosamine mutase (440 aa).

Ser-97 acts as the Phosphoserine intermediate in catalysis. Mg(2+) is bound by residues Ser-97, Asp-237, Asp-239, and Asp-241. Phosphoserine is present on Ser-97.

The protein belongs to the phosphohexose mutase family. It depends on Mg(2+) as a cofactor. In terms of processing, activated by phosphorylation.

The enzyme catalyses alpha-D-glucosamine 1-phosphate = D-glucosamine 6-phosphate. Catalyzes the conversion of glucosamine-6-phosphate to glucosamine-1-phosphate. The protein is Phosphoglucosamine mutase of Nautilia profundicola (strain ATCC BAA-1463 / DSM 18972 / AmH).